The sequence spans 30 residues: Dermaseptin-3.4TR (30 aa).

In terms of tissue distribution, expressed by the skin glands.

The protein localises to the secreted. Has antimicrobial activity. The chain is Dermaseptin-3.4TR from Phyllomedusa trinitatis (Trinidad leaf frog).